Reading from the N-terminus, the 184-residue chain is Dirigent protein 13 (184 aa).

An N-terminal signal peptide occupies residues 1-25 (MANQIYIISLIFLSVLLYQSTTVLS). An intrachain disulfide couples C36 to C182. 2 N-linked (GlcNAc...) asparagine glycosylation sites follow: N55 and N119.

It belongs to the plant dirigent protein family. As to quaternary structure, homodimer. Expressed in root vasculature and meristems, cotyledons, flowers, siliques, and leaf trichomes. Localized in the interfascicular/vascular cambia and developing xylem.

It localises to the secreted. The protein localises to the extracellular space. It is found in the apoplast. Dirigent proteins impart stereoselectivity on the phenoxy radical-coupling reaction, yielding optically active lignans from two molecules of coniferyl alcohol in the biosynthesis of lignans, flavonolignans, and alkaloids and thus plays a central role in plant secondary metabolism. This Arabidopsis thaliana (Mouse-ear cress) protein is Dirigent protein 13 (DIR13).